Consider the following 303-residue polypeptide: tRNA dimethylallyltransferase 1 (303 aa).

Position 17–24 (17–24 (GPTACGKT)) interacts with ATP. 19-24 (TACGKT) lines the substrate pocket. The tract at residues 42 to 45 (DSRQ) is interaction with substrate tRNA.

It belongs to the IPP transferase family. As to quaternary structure, monomer. It depends on Mg(2+) as a cofactor.

The catalysed reaction is adenosine(37) in tRNA + dimethylallyl diphosphate = N(6)-dimethylallyladenosine(37) in tRNA + diphosphate. Functionally, catalyzes the transfer of a dimethylallyl group onto the adenine at position 37 in tRNAs that read codons beginning with uridine, leading to the formation of N6-(dimethylallyl)adenosine (i(6)A). This chain is tRNA dimethylallyltransferase 1, found in Hahella chejuensis (strain KCTC 2396).